The following is a 102-amino-acid chain: Small ribosomal subunit protein uS10 (102 aa).

Belongs to the universal ribosomal protein uS10 family. As to quaternary structure, part of the 30S ribosomal subunit.

Involved in the binding of tRNA to the ribosomes. This is Small ribosomal subunit protein uS10 from Hyperthermus butylicus (strain DSM 5456 / JCM 9403 / PLM1-5).